Consider the following 294-residue polypeptide: Flagellin B1 (294 aa).

The propeptide occupies 1 to 8 (MKTRTRKG).

This sequence belongs to the archaeal flagellin family.

The protein localises to the archaeal flagellum. Functionally, flagellin is the subunit protein which polymerizes to form the filaments of archaeal flagella. In Thermococcus kodakarensis (strain ATCC BAA-918 / JCM 12380 / KOD1) (Pyrococcus kodakaraensis (strain KOD1)), this protein is Flagellin B1 (flaB1).